We begin with the raw amino-acid sequence, 217 residues long: LexA repressor (217 aa).

The H-T-H motif DNA-binding region spans 28–48; the sequence is RAEIAAEFGFSSPNAAEEHLR. Active-site for autocatalytic cleavage activity residues include serine 136 and lysine 173.

It belongs to the peptidase S24 family. In terms of assembly, homodimer.

The catalysed reaction is Hydrolysis of Ala-|-Gly bond in repressor LexA.. Functionally, represses a number of genes involved in the response to DNA damage (SOS response), including recA and lexA. In the presence of single-stranded DNA, RecA interacts with LexA causing an autocatalytic cleavage which disrupts the DNA-binding part of LexA, leading to derepression of the SOS regulon and eventually DNA repair. The sequence is that of LexA repressor from Cupriavidus necator (strain ATCC 17699 / DSM 428 / KCTC 22496 / NCIMB 10442 / H16 / Stanier 337) (Ralstonia eutropha).